The following is a 416-amino-acid chain: Phosphoglycerate kinase (416 aa).

Residues Val23, Asp24, Phe25, Asn26, Gln38, Arg39, Ser62, His63, Gly65, Arg66, Leu121, Arg122, His168, and Arg169 each contribute to the (2R)-3-phosphoglycerate site. ADP is bound at residue Gly212. Position 212 (Gly212) interacts with CDP. AMP-binding residues include Ala213 and Lys214. Ala213 contributes to the ATP binding site. A Mg(2+)-binding site is contributed by Ala213. CDP is bound at residue Asp217. Asp217 contacts Mg(2+). Lys218 lines the AMP pocket. Lys218 is an ATP binding site. Gly236 lines the ADP pocket. Gly236 provides a ligand contact to CDP. Residues Gly237 and Gly311 each contribute to the AMP site. 2 residues coordinate ATP: Gly237 and Gly311. 2 residues coordinate CDP: Gly336 and Phe341. Phe341 lines the ADP pocket. Glu342 provides a ligand contact to AMP. Positions 342, 373, and 374 each coordinate ATP. Asp373 contacts Mg(2+).

The protein belongs to the phosphoglycerate kinase family. Monomer. Mg(2+) serves as cofactor.

The protein resides in the cytoplasm. The protein localises to the mitochondrion. The enzyme catalyses (2R)-3-phosphoglycerate + ATP = (2R)-3-phospho-glyceroyl phosphate + ADP. It participates in carbohydrate degradation; glycolysis; pyruvate from D-glyceraldehyde 3-phosphate: step 2/5. Its function is as follows. Catalyzes one of the two ATP producing reactions in the glycolytic pathway via the reversible conversion of 1,3-diphosphoglycerate to 3-phosphoglycerate. Both L- and D- forms of purine and pyrimidine nucleotides can be used as substrates, but the activity is much lower on pyrimidines. Negatively regulates the biosynthesis of acetyl-CoA from pyruvate in the mitochondrion. The polypeptide is Phosphoglycerate kinase (PGK1) (Debaryomyces hansenii (strain ATCC 36239 / CBS 767 / BCRC 21394 / JCM 1990 / NBRC 0083 / IGC 2968) (Yeast)).